Reading from the N-terminus, the 333-residue chain is Ribosomal RNA small subunit methyltransferase H (333 aa).

S-adenosyl-L-methionine-binding positions include Gly34 to His36, Asp59, Phe86, Asp112, and Gln119.

It belongs to the methyltransferase superfamily. RsmH family.

Its subcellular location is the cytoplasm. It carries out the reaction cytidine(1402) in 16S rRNA + S-adenosyl-L-methionine = N(4)-methylcytidine(1402) in 16S rRNA + S-adenosyl-L-homocysteine + H(+). Specifically methylates the N4 position of cytidine in position 1402 (C1402) of 16S rRNA. This is Ribosomal RNA small subunit methyltransferase H from Prosthecochloris aestuarii (strain DSM 271 / SK 413).